A 132-amino-acid chain; its full sequence is uncharacterized protein (132 aa).

WD repeat units lie at residues 14–53 (DLQD…LEIL) and 58–97 (AHDD…LANV).

This is an uncharacterized protein from Acanthamoeba polyphaga (Amoeba).